The chain runs to 269 residues: Glutamate racemase (269 aa).

Substrate-binding positions include 14–15 (DS) and 46–47 (YS). Cys78 (proton donor/acceptor) is an active-site residue. 79–80 (NT) is a binding site for substrate. The active-site Proton donor/acceptor is the Cys189. Residue 190-191 (TH) participates in substrate binding.

This sequence belongs to the aspartate/glutamate racemases family.

It carries out the reaction L-glutamate = D-glutamate. It participates in cell wall biogenesis; peptidoglycan biosynthesis. Provides the (R)-glutamate required for cell wall biosynthesis. The chain is Glutamate racemase from Haemophilus influenzae (strain ATCC 51907 / DSM 11121 / KW20 / Rd).